A 304-amino-acid chain; its full sequence is N-acetyl-D-glucosamine kinase (304 aa).

ATP contacts are provided by residues 4-11 (GFDMGGTK) and 133-140 (GLGGGLVI). Zn(2+) is bound by residues H157, C177, C179, and C184.

Belongs to the ROK (NagC/XylR) family. NagK subfamily.

It catalyses the reaction N-acetyl-D-glucosamine + ATP = N-acetyl-D-glucosamine 6-phosphate + ADP + H(+). The protein operates within cell wall biogenesis; peptidoglycan recycling. Catalyzes the phosphorylation of N-acetyl-D-glucosamine (GlcNAc) derived from cell-wall degradation, yielding GlcNAc-6-P. In Pectobacterium atrosepticum (strain SCRI 1043 / ATCC BAA-672) (Erwinia carotovora subsp. atroseptica), this protein is N-acetyl-D-glucosamine kinase.